Consider the following 348-residue polypeptide: Nicotinate-nucleotide--dimethylbenzimidazole phosphoribosyltransferase (348 aa).

Catalysis depends on glutamate 316, which acts as the Proton acceptor.

The protein belongs to the CobT family.

The catalysed reaction is 5,6-dimethylbenzimidazole + nicotinate beta-D-ribonucleotide = alpha-ribazole 5'-phosphate + nicotinate + H(+). The protein operates within nucleoside biosynthesis; alpha-ribazole biosynthesis; alpha-ribazole from 5,6-dimethylbenzimidazole: step 1/2. Functionally, catalyzes the synthesis of alpha-ribazole-5'-phosphate from nicotinate mononucleotide (NAMN) and 5,6-dimethylbenzimidazole (DMB). The sequence is that of Nicotinate-nucleotide--dimethylbenzimidazole phosphoribosyltransferase from Xanthomonas axonopodis pv. citri (strain 306).